A 334-amino-acid chain; its full sequence is tRNA U34 carboxymethyltransferase (334 aa).

Carboxy-S-adenosyl-L-methionine is bound by residues K91, W105, K110, G130, 152 to 154 (DPT), 181 to 182 (IE), M196, Y200, and R315.

Belongs to the class I-like SAM-binding methyltransferase superfamily. CmoB family. Homotetramer.

The catalysed reaction is carboxy-S-adenosyl-L-methionine + 5-hydroxyuridine(34) in tRNA = 5-carboxymethoxyuridine(34) in tRNA + S-adenosyl-L-homocysteine + H(+). In terms of biological role, catalyzes carboxymethyl transfer from carboxy-S-adenosyl-L-methionine (Cx-SAM) to 5-hydroxyuridine (ho5U) to form 5-carboxymethoxyuridine (cmo5U) at position 34 in tRNAs. This is tRNA U34 carboxymethyltransferase from Klebsiella pneumoniae (strain 342).